The sequence spans 418 residues: F420-non-reducing hydrogenase vhu subunit A (418 aa).

The Ni(2+) site is built by Cys61 and Cys64.

This sequence belongs to the [NiFe]/[NiFeSe] hydrogenase large subunit family. As to quaternary structure, the F420-non-reducing hydrogenase vhu is composed of four subunits; VhuA, VhuD, VhuG and VhuU. Ni(2+) is required as a cofactor.

The chain is F420-non-reducing hydrogenase vhu subunit A (vhuA) from Methanocaldococcus jannaschii (strain ATCC 43067 / DSM 2661 / JAL-1 / JCM 10045 / NBRC 100440) (Methanococcus jannaschii).